The following is a 175-amino-acid chain: MNAKDIFNLVNYNDGKFKSEAQSKFFNDISIGGEITVNGGQIYKSRWNWIVIIDEIGIVEIYKNTNKNRTLHWSRDTNEQYKKDKASKLSRVTQEDIEFIKKDILMYDNLIAEEQAVIDKFDEIKASREIPDFMKESVNERYTLISERIETYKKQRAERQNTLRKFEERLNTVLA.

This is an uncharacterized protein from Enterobacteria phage T4 (Bacteriophage T4).